We begin with the raw amino-acid sequence, 220 residues long: Lipoprotein-releasing system ATP-binding protein LolD (220 aa).

The region spanning 1–220 is the ABC transporter domain; the sequence is MRAVDIHKSY…YRMKDGQWQS (220 aa). ATP is bound at residue 37–44; it reads GASGAGKS.

The protein belongs to the ABC transporter superfamily. Lipoprotein translocase (TC 3.A.1.125) family. The complex is composed of two ATP-binding proteins (LolD) and two transmembrane proteins (LolC and LolE).

It is found in the cell inner membrane. Part of the ABC transporter complex LolCDE involved in the translocation of mature outer membrane-directed lipoproteins, from the inner membrane to the periplasmic chaperone, LolA. Responsible for the formation of the LolA-lipoprotein complex in an ATP-dependent manner. The polypeptide is Lipoprotein-releasing system ATP-binding protein LolD (Bdellovibrio bacteriovorus (strain ATCC 15356 / DSM 50701 / NCIMB 9529 / HD100)).